A 398-amino-acid chain; its full sequence is Argininosuccinate synthase (398 aa).

Position 8–16 (8–16 (AYSGGLDTS)) interacts with ATP. An L-citrulline-binding site is contributed by Tyr87. Gly117 serves as a coordination point for ATP. L-aspartate contacts are provided by Thr119, Asn123, and Asp124. Asn123 lines the L-citrulline pocket. Residues Arg127, Ser175, Glu260, and Tyr272 each contribute to the L-citrulline site.

This sequence belongs to the argininosuccinate synthase family. Type 1 subfamily. As to quaternary structure, homotetramer.

It localises to the cytoplasm. The catalysed reaction is L-citrulline + L-aspartate + ATP = 2-(N(omega)-L-arginino)succinate + AMP + diphosphate + H(+). It participates in amino-acid biosynthesis; L-arginine biosynthesis; L-arginine from L-ornithine and carbamoyl phosphate: step 2/3. The polypeptide is Argininosuccinate synthase (Mycobacterium ulcerans (strain Agy99)).